The primary structure comprises 409 residues: MNQKHSEPFYISPRLFDNRRLKRRRCRWMERLLEHQRICMARMRDQVALASKTDRQLSHLQRRHVASTLQPDVTIDLLSDDDETPSAGQPAAAGHNRLLIPAPGHRAHRTGRRQAPRRAATHSYPVTDSILITSDDEHNEQEPSSTARVRSQLSMRSPPPLAPLTQSETIEEVTVSLVPRTSTTANCLTRVSGHPKPCRASTAASNGFATAEGGEGGNETGCFLEVDVGGGITATLPDETTVHTVIANRIYELSLSKLREGLAFSGVPEYTNDLMPEQLQKLSPALRAKVAPLVAPSPPTPISLKLSSDLSISLISDEDDCESTGPHVNGGVGTEPVHPVVVAAAEAHAAAKLLKQQQPQLSVVQHLQYVGGGLAAPVALALPVMAANPTSSASVVALPLQLPRRRKLG.

Ser-86 carries the phosphoserine modification. Residues 106–120 show a composition bias toward basic residues; that stretch reads RAHRTGRRQAPRRAA. The disordered stretch occupies residues 106–165; sequence RAHRTGRRQAPRRAATHSYPVTDSILITSDDEHNEQEPSSTARVRSQLSMRSPPPLAPLT. A Phosphothreonine modification is found at Thr-133. Ser-134 bears the Phosphoserine mark. Positions 142–155 are enriched in polar residues; sequence EPSSTARVRSQLSM.

This chain is Protein a6 (a6), found in Drosophila melanogaster (Fruit fly).